The sequence spans 122 residues: uncharacterized protein (122 aa).

This is an uncharacterized protein from Rickettsia conorii (strain ATCC VR-613 / Malish 7).